We begin with the raw amino-acid sequence, 180 residues long: Large ribosomal subunit protein uL6 (180 aa).

It belongs to the universal ribosomal protein uL6 family. In terms of assembly, part of the 50S ribosomal subunit.

Its function is as follows. This protein binds to the 23S rRNA, and is important in its secondary structure. It is located near the subunit interface in the base of the L7/L12 stalk, and near the tRNA binding site of the peptidyltransferase center. This is Large ribosomal subunit protein uL6 from Borrelia duttonii (strain Ly).